Here is a 78-residue protein sequence, read N- to C-terminus: MLVLTRKMGETITIGDQIRIKVVEMKGNQVRLGIEAPGDMRIYREEIYLKVQKENQLAAAWSLEDLESAVNFAGAGKE.

This sequence belongs to the CsrA/RsmA family. As to quaternary structure, homodimer; the beta-strands of each monomer intercalate to form a hydrophobic core, while the alpha-helices form wings that extend away from the core.

It is found in the cytoplasm. A translational regulator that binds mRNA to regulate translation initiation and/or mRNA stability. Usually binds in the 5'-UTR at or near the Shine-Dalgarno sequence preventing ribosome-binding, thus repressing translation. Its main target seems to be the major flagellin gene, while its function is anatagonized by FliW. This chain is Translational regulator CsrA, found in Geobacter metallireducens (strain ATCC 53774 / DSM 7210 / GS-15).